Consider the following 729-residue polypeptide: 1,4-alpha-glucan branching enzyme GlgB (729 aa).

Asp-405 (nucleophile) is an active-site residue. The active-site Proton donor is the Glu-458.

Belongs to the glycosyl hydrolase 13 family. GlgB subfamily. Monomer.

It carries out the reaction Transfers a segment of a (1-&gt;4)-alpha-D-glucan chain to a primary hydroxy group in a similar glucan chain.. The protein operates within glycan biosynthesis; glycogen biosynthesis. In terms of biological role, catalyzes the formation of the alpha-1,6-glucosidic linkages in glycogen by scission of a 1,4-alpha-linked oligosaccharide from growing alpha-1,4-glucan chains and the subsequent attachment of the oligosaccharide to the alpha-1,6 position. This Mannheimia succiniciproducens (strain KCTC 0769BP / MBEL55E) protein is 1,4-alpha-glucan branching enzyme GlgB.